The following is a 170-amino-acid chain: Archaemetzincin (170 aa).

Zn(2+) is bound at residue His110. Glu111 functions as the Proton acceptor in the catalytic mechanism. His114, His120, Cys121, Cys125, Cys144, and Cys147 together coordinate Zn(2+).

It belongs to the peptidase M54 family. As to quaternary structure, monomer. The cofactor is Zn(2+).

In terms of biological role, probable zinc metalloprotease whose natural substrate is unknown. In Nanoarchaeum equitans (strain Kin4-M), this protein is Archaemetzincin.